Here is a 194-residue protein sequence, read N- to C-terminus: Amidophosphoribosyltransferase (194 aa).

The propeptide occupies 1 to 11 (MPHEPKGLNEE). C12 functions as the Nucleophile in the catalytic mechanism. The Glutamine amidotransferase type-2 domain maps to 12–194 (CGVFGVWGNP…PHGFRPMVVG (183 aa)).

This sequence in the C-terminal section; belongs to the purine/pyrimidine phosphoribosyltransferase family.

The catalysed reaction is 5-phospho-beta-D-ribosylamine + L-glutamate + diphosphate = 5-phospho-alpha-D-ribose 1-diphosphate + L-glutamine + H2O. Its pathway is purine metabolism; IMP biosynthesis via de novo pathway; N(1)-(5-phospho-D-ribosyl)glycinamide from 5-phospho-alpha-D-ribose 1-diphosphate: step 1/2. In terms of biological role, catalyzes the formation of phosphoribosylamine from phosphoribosylpyrophosphate (PRPP) and glutamine. The chain is Amidophosphoribosyltransferase from Lacticaseibacillus casei (Lactobacillus casei).